The primary structure comprises 327 residues: Petrobactin synthase (327 aa).

It catalyses the reaction N(8)-citryl-spermidine + 3,4-dihydroxybenzoyl-[aryl-carrier protein] = N(1)-(3,4-dihydroxybenzoyl)-N(8)-citryl-spermidine + holo-[aryl-carrier protein] + H(+). The enzyme catalyses N(8),N'(8)-citryl-bis(spermidine) + 3,4-dihydroxybenzoyl-[aryl-carrier protein] = N(1)-(3,4-dihydroxybenzoyl)-N(8),N'(8)-citryl-bis(spermidine) + holo-[aryl-carrier protein] + H(+). The catalysed reaction is N(1)-(3,4-dihydroxybenzoyl)-N(8),N'(8)-citryl-bis(spermidine) + 3,4-dihydroxybenzoyl-[aryl-carrier protein] = petrobactin + holo-[aryl-carrier protein] + H(+). The protein operates within siderophore biosynthesis; petrobactin biosynthesis. Functionally, involved in the biosynthesis of petrobactin, a catecholate siderophore that functions in both iron acquisition and virulence. Transfers the activated 3,4-dihydroxybenzoate (3,4-DHBA) moiety from 3,4-DHBA-loaded AsbD to different receipient molecules, including N-citryl-spermidine, N8,N'8-citryl-bis(spermidine) and N1-(3,4-dihydroxybenzoyl)-N8,N'8-citryl-bis(spermidine). Also catalyzes the transfer of the activated 3,4-DHBA moiety from 3,4-DHBA-loaded AsbD to spermidine to generate DHB-spermidine (DHB-SP). The polypeptide is Petrobactin synthase (Bacillus anthracis).